The primary structure comprises 238 residues: MPLKDLPLDAQPREKLLARGPAALSDAELLAILLRTGLAGKGVLQLAQELLDDPVRDPATGRSAGGGFGGIAGLLHASSQDLQRIKGLGPAKRAELMAVLELARRAMAQQLREREVFDSPQAVQHYLQLHLAGRTHEVFAVLFLDSGNRLIAMEELFRGTLTQTSVYPREVVLRALHHHAAAVVLAHNHPSGSVQPSRADEALTQTLKAALALVDVRVLDHVIVAPGAALSMAEQGLV.

The MPN domain maps to 116–238 (VFDSPQAVQH…ALSMAEQGLV (123 aa)). The Zn(2+) site is built by His187, His189, and Asp200. A JAMM motif motif is present at residues 187 to 200 (HNHPSGSVQPSRAD).

The protein belongs to the UPF0758 family.

The polypeptide is UPF0758 protein Dtpsy_2777 (Acidovorax ebreus (strain TPSY) (Diaphorobacter sp. (strain TPSY))).